Reading from the N-terminus, the 585-residue chain is Proline--tRNA ligase (585 aa).

This sequence belongs to the class-II aminoacyl-tRNA synthetase family. ProS type 1 subfamily. As to quaternary structure, homodimer.

The protein resides in the cytoplasm. The enzyme catalyses tRNA(Pro) + L-proline + ATP = L-prolyl-tRNA(Pro) + AMP + diphosphate. In terms of biological role, catalyzes the attachment of proline to tRNA(Pro) in a two-step reaction: proline is first activated by ATP to form Pro-AMP and then transferred to the acceptor end of tRNA(Pro). As ProRS can inadvertently accommodate and process non-cognate amino acids such as alanine and cysteine, to avoid such errors it has two additional distinct editing activities against alanine. One activity is designated as 'pretransfer' editing and involves the tRNA(Pro)-independent hydrolysis of activated Ala-AMP. The other activity is designated 'posttransfer' editing and involves deacylation of mischarged Ala-tRNA(Pro). The misacylated Cys-tRNA(Pro) is not edited by ProRS. The chain is Proline--tRNA ligase from Mycolicibacterium vanbaalenii (strain DSM 7251 / JCM 13017 / BCRC 16820 / KCTC 9966 / NRRL B-24157 / PYR-1) (Mycobacterium vanbaalenii).